A 301-amino-acid polypeptide reads, in one-letter code: Methionyl-tRNA formyltransferase (301 aa).

Residue 110-113 (SLLP) participates in (6S)-5,6,7,8-tetrahydrofolate binding.

This sequence belongs to the Fmt family.

It carries out the reaction L-methionyl-tRNA(fMet) + (6R)-10-formyltetrahydrofolate = N-formyl-L-methionyl-tRNA(fMet) + (6S)-5,6,7,8-tetrahydrofolate + H(+). Attaches a formyl group to the free amino group of methionyl-tRNA(fMet). The formyl group appears to play a dual role in the initiator identity of N-formylmethionyl-tRNA by promoting its recognition by IF2 and preventing the misappropriation of this tRNA by the elongation apparatus. This chain is Methionyl-tRNA formyltransferase, found in Acidiphilium cryptum (strain JF-5).